The chain runs to 82 residues: uncharacterized protein (82 aa).

This is an uncharacterized protein from Pigeon circovirus (PiCV).